A 341-amino-acid chain; its full sequence is S-adenosylmethionine:tRNA ribosyltransferase-isomerase (341 aa).

The protein belongs to the QueA family. Monomer.

The protein localises to the cytoplasm. The enzyme catalyses 7-aminomethyl-7-carbaguanosine(34) in tRNA + S-adenosyl-L-methionine = epoxyqueuosine(34) in tRNA + adenine + L-methionine + 2 H(+). It functions in the pathway tRNA modification; tRNA-queuosine biosynthesis. Functionally, transfers and isomerizes the ribose moiety from AdoMet to the 7-aminomethyl group of 7-deazaguanine (preQ1-tRNA) to give epoxyqueuosine (oQ-tRNA). This chain is S-adenosylmethionine:tRNA ribosyltransferase-isomerase, found in Herminiimonas arsenicoxydans.